The following is a 599-amino-acid chain: Elongation factor 4 (599 aa).

In terms of domain architecture, tr-type G spans 2-184 (KNIRNFSIIA…RLVRDIPPPQ (183 aa)). Residues 14-19 (DHGKST) and 131-134 (NKID) contribute to the GTP site.

It belongs to the TRAFAC class translation factor GTPase superfamily. Classic translation factor GTPase family. LepA subfamily.

The protein localises to the cell inner membrane. The catalysed reaction is GTP + H2O = GDP + phosphate + H(+). Required for accurate and efficient protein synthesis under certain stress conditions. May act as a fidelity factor of the translation reaction, by catalyzing a one-codon backward translocation of tRNAs on improperly translocated ribosomes. Back-translocation proceeds from a post-translocation (POST) complex to a pre-translocation (PRE) complex, thus giving elongation factor G a second chance to translocate the tRNAs correctly. Binds to ribosomes in a GTP-dependent manner. The polypeptide is Elongation factor 4 (Salmonella agona (strain SL483)).